Here is a 279-residue protein sequence, read N- to C-terminus: MGTIKIVTDSSITIEPELIKALDITVVPLSVMIDSKLYSDNDLKEEGHFLSLMKASKSLPKTSQPPVGLFAETYENLVKKGVTDIVAIHLSPALSGTIEASRQGAEIAETPVTVLDSGFTDQAMKFQVVEAAKMAKAGASLNEILAAVQAIKSKTELYIGVSTLENLVKGGRIGRVTGVLSSLLNVKVVMALKNDELKTLVKGRGNKTFTKWLDSYLAKNSHRPIAEIAISYAGEASLALTLKERIAAYYNHSISVLETGSIIQTHTGEGAFAVMVRYE.

The DegV domain maps to 4 to 278; it reads IKIVTDSSIT…EGAFAVMVRY (275 aa). Residues Thr-62 and Ser-95 each contribute to the hexadecanoate site.

In terms of biological role, may bind long-chain fatty acids, such as palmitate, and may play a role in lipid transport or fatty acid metabolism. The protein is DegV domain-containing protein SpyM3_1149 of Streptococcus pyogenes serotype M3 (strain ATCC BAA-595 / MGAS315).